Consider the following 693-residue polypeptide: MMGPEDAGACSGRNAELLPVPGPMGQDGKTVPATGGFSGGAVAAEPPGEAGEEEAPPPRQLLQRYLAAAAGPLQPGLGGVEAEAAAVPAARGSGMTNGDSGFLLLQDRRGPEEARRRRTCGRPCLAEPADEGVDGAGGLDDWAAPLEDPLRSCCLAAGDTDDPDPTATTSAGRDVGSAESSLGLPDARFGSRNTFEVSRRQSAGDLLPSAGQSAPLPAAEQGPGGTTVRARRSGGFADFFARNLFPKRTKELKSVVHSAPGWKLFGKVPPRENLQKTSKIIQQEYEARTGRTCKVPPQSSRRKNFEFEPLSTTALILEDRPSNLPAKSVEEALRHRQEYDEMVAEAKKREIKEAHKRKRIMKERFKQEESIASAMVIWINEILPNWEVMRSTRRVRELWWQGLPPSVRGKVWSLAVGNELNITPELYEIFLSRAKERWKSFSESSSDSDMEGLSVADREASLELIKLDISRTFPSLYIFQKGGPYHDVLHSILGAYTCYRPDVGYVQGMSFIAAVLILNLEEADAFIAFANLLNRPCQLAFFRVDHSMMLKYFATFEVFFEENLSKLFLHFKSYNLTPDIYLIDWIFTLYSKSLPLDLACRVWDVFCRDGEEFLFRTGLGILRLYEDILLQMDFIHIAQFLTKLPEDITSEKLFSCIAAIQMQNSTKKWTQVFASVTKDIKEGDKNNSPALKS.

Residue Met1 is modified to N-acetylmethionine. Disordered stretches follow at residues 1–57 (MMGP…EAPP), 91–120 (RGSG…RRTC), and 156–229 (AAGD…TTVR). Low complexity predominate over residues 40–49 (GAVAAEPPGE). Residues 106–115 (QDRRGPEEAR) show a composition bias toward basic and acidic residues. Ser202 and Ser233 each carry phosphoserine. The region spanning 402-610 (GLPPSVRGKV…RVWDVFCRDG (209 aa)) is the Rab-GAP TBC domain.

In terms of assembly, interacts with RAB11A; this interaction recruits TBC1D12 to RAB11A-positive recycling endosomes.

The protein resides in the endosome. Its function is as follows. RAB11A-binding protein that plays a role in neurite outgrowth. This Rattus norvegicus (Rat) protein is TBC1 domain family member 12 (Tbc1d12).